A 127-amino-acid polypeptide reads, in one-letter code: Glycine cleavage system H protein (127 aa).

The Lipoyl-binding domain maps to 22–104 (EVVIGITHFA…YEGAWMVKVE (83 aa)). Lys63 is subject to N6-lipoyllysine.

This sequence belongs to the GcvH family. In terms of assembly, the glycine cleavage system is composed of four proteins: P, T, L and H. (R)-lipoate is required as a cofactor.

Its function is as follows. The glycine cleavage system catalyzes the degradation of glycine. The H protein shuttles the methylamine group of glycine from the P protein to the T protein. In terms of biological role, is also involved in protein lipoylation via its role as an octanoyl/lipoyl carrier protein intermediate. This is Glycine cleavage system H protein from Bacillus cereus (strain G9842).